Consider the following 201-residue polypeptide: Cytochrome c oxidase assembly protein CtaG (201 aa).

Residues 1 to 12 (MTDQGENEKKQR) lie on the Cytoplasmic side of the membrane. A helical; Signal-anchor for type II membrane protein transmembrane segment spans residues 13–35 (RSNATIAVACLSFFVCMIGAAYA). Residues 36–201 (SVPLYRIFCQ…KAVGSTRNGG (166 aa)) lie on the Periplasmic side of the membrane.

The protein belongs to the COX11/CtaG family.

The protein resides in the cell inner membrane. In terms of biological role, exerts its effect at some terminal stage of cytochrome c oxidase synthesis, probably by being involved in the insertion of the copper B into subunit I. The protein is Cytochrome c oxidase assembly protein CtaG of Brucella suis biovar 1 (strain 1330).